The following is a 142-amino-acid chain: Large ribosomal subunit protein uL13 (142 aa).

The protein belongs to the universal ribosomal protein uL13 family. In terms of assembly, part of the 50S ribosomal subunit.

This protein is one of the early assembly proteins of the 50S ribosomal subunit, although it is not seen to bind rRNA by itself. It is important during the early stages of 50S assembly. This chain is Large ribosomal subunit protein uL13, found in Methanosphaera stadtmanae (strain ATCC 43021 / DSM 3091 / JCM 11832 / MCB-3).